We begin with the raw amino-acid sequence, 368 residues long: Glutamyl-tRNA reductase (368 aa).

Substrate contacts are provided by residues 43–46 (TCHR), S89, 94–96 (EHQ), and Q100. C44 serves as the catalytic Nucleophile. 164–169 (GTGMMG) is a binding site for NADP(+).

Belongs to the glutamyl-tRNA reductase family. As to quaternary structure, homodimer.

The catalysed reaction is (S)-4-amino-5-oxopentanoate + tRNA(Glu) + NADP(+) = L-glutamyl-tRNA(Glu) + NADPH + H(+). It functions in the pathway porphyrin-containing compound metabolism; protoporphyrin-IX biosynthesis; 5-aminolevulinate from L-glutamyl-tRNA(Glu): step 1/2. Catalyzes the NADPH-dependent reduction of glutamyl-tRNA(Glu) to glutamate 1-semialdehyde (GSA). The polypeptide is Glutamyl-tRNA reductase (Thermosipho melanesiensis (strain DSM 12029 / CIP 104789 / BI429)).